The sequence spans 249 residues: Histone H1 (249 aa).

Composition is skewed to low complexity over residues 1 to 19 and 27 to 43; these read MSDS…QTAS and KKPA…TTAP. Disordered regions lie at residues 1-53 and 105-249; these read MSDS…QQMV and QTKG…ATKK. One can recognise an H15 domain in the interval 45–119; sequence THPPTQQMVD…GASGSFKLSA (75 aa). The segment covering 121-134 has biased composition (basic and acidic residues); that stretch reads SKKEPKPKVSSVEK. The segment covering 146-158 has biased composition (basic residues); it reads AKKKTISATKKPK. Positions 173–190 are enriched in basic and acidic residues; sequence KSVDKKKAEKAKAKDAKK. The segment covering 195-233 has biased composition (low complexity); it reads KAKPTTAKAKSSAAKPKTPKPKTTSAKPKKVVAAASPKK. A compositionally biased stretch (basic residues) spans 234-249; it reads AAAKKPKAKTASATKK.

It belongs to the histone H1/H5 family.

The protein localises to the nucleus. The protein resides in the chromosome. In terms of biological role, histones H1 are necessary for the condensation of nucleosome chains into higher-order structures. The sequence is that of Histone H1 (His1) from Drosophila hydei (Fruit fly).